A 137-amino-acid polypeptide reads, in one-letter code: MLQPKRTKYRKQHKGRNTGVAIAGSKVSFGEYGLKATTRGRITARQIEAARRTISRHVKRGGKIWIRVFPDKPVSKKPLEVRMGSGKGSVEFWVAEIKPGTMLYELEGVSEELAREAFRLAAAKLPVQTTFSLRTVM.

Belongs to the universal ribosomal protein uL16 family. In terms of assembly, part of the 50S ribosomal subunit.

In terms of biological role, binds 23S rRNA and is also seen to make contacts with the A and possibly P site tRNAs. This Methylococcus capsulatus (strain ATCC 33009 / NCIMB 11132 / Bath) protein is Large ribosomal subunit protein uL16.